We begin with the raw amino-acid sequence, 422 residues long: Serine protease HTRA2, mitochondrial (422 aa).

Residues 1 to 17 constitute a mitochondrion transit peptide; that stretch reads MALRGCHRLEVIFKRCI. The propeptide occupies 18-74; that stretch reads ASPVLHSQAGNRRSSQLAIKGVDPNSNGNSGQYQQNGEHKEKGWRRLVRFFVPFSLG. The disordered stretch occupies residues 33 to 55; sequence QLAIKGVDPNSNGNSGQYQQNGE. A compositionally biased stretch (low complexity) spans 42-53; it reads NSNGNSGQYQQN. A helical membrane pass occupies residues 64 to 82; sequence LVRFFVPFSLGAAVSAAII. Short sequence motifs (IAP-binding) lie at residues 75 to 78 and 94 to 97; these read AAVS and SKMT. The segment at 139–302 is serine protease; the sequence is SNGSGFIIEQ…IPIDYVKVFL (164 aa). Residues histidine 157, aspartate 189, and serine 266 each act as charge relay system in the active site. In terms of domain architecture, PDZ spans 325-410; the sequence is MGITMLTLTP…TLDIVILRGV (86 aa).

Belongs to the peptidase S1C family. In terms of assembly, interacts with th/DIAP1 (via BIR 2 domain).

The protein localises to the mitochondrion intermembrane space. Its subcellular location is the mitochondrion membrane. It carries out the reaction Cleavage of non-polar aliphatic amino-acids at the P1 position, with a preference for Val, Ile and Met. At the P2 and P3 positions, Arg is selected most strongly with a secondary preference for other hydrophilic residues.. Serine protease that shows proteolytic activity against a non-specific substrate beta-casein. Promotes or induces cell death either by direct binding to and inhibition of BIRC proteins (also called inhibitor of apoptosis proteins, IAPs), leading to an increase in caspase activity, or by a BIRC inhibition-independent, caspase-independent and serine protease activity-dependent mechanism. Can antagonize antiapoptotic activity of th/Diap1 by directly inducing the degradation of th/Diap1. In Drosophila simulans (Fruit fly), this protein is Serine protease HTRA2, mitochondrial.